Here is a 105-residue protein sequence, read N- to C-terminus: Large ribosomal subunit protein uL24 (105 aa).

The protein belongs to the universal ribosomal protein uL24 family. As to quaternary structure, part of the 50S ribosomal subunit.

One of two assembly initiator proteins, it binds directly to the 5'-end of the 23S rRNA, where it nucleates assembly of the 50S subunit. Functionally, one of the proteins that surrounds the polypeptide exit tunnel on the outside of the subunit. The protein is Large ribosomal subunit protein uL24 of Vibrio atlanticus (strain LGP32) (Vibrio splendidus (strain Mel32)).